The following is an 85-amino-acid chain: Small ribosomal subunit protein bS20 (85 aa).

This sequence belongs to the bacterial ribosomal protein bS20 family.

Binds directly to 16S ribosomal RNA. In Borreliella afzelii (strain PKo) (Borrelia afzelii), this protein is Small ribosomal subunit protein bS20.